A 308-amino-acid polypeptide reads, in one-letter code: 50 kDa gamma-zein (308 aa).

Residues 1–19 form the signal peptide; that stretch reads MKLVLVVLAFIALVSSVSC. Positions 27-159 are disordered; the sequence is CGQQQSHEQQ…QPQQPQQYQQ (133 aa). The segment covering 55–119 has biased composition (low complexity); sequence HHQQQQHQQQ…QHHQQSQGHV (65 aa). The span at 120–129 shows a compositional bias: basic and acidic residues; that stretch reads QQHEQSHEQH. Residues 130–159 show a composition bias toward low complexity; that stretch reads QGQSHEQQHQQQFQGHDKQQQPQQPQQYQQ. C286 is lipidated: GPI-anchor amidated cysteine. The propeptide at 287-308 is removed in mature form; it reads GLYHSYYQNNPCSSNDISGVCN.

This sequence belongs to the gliadin/glutenin family. As to quaternary structure, interacts with OP10 (via N-terminus).

The protein localises to the cell membrane. Functionally, zeins are major seed storage proteins. In Zea mays (Maize), this protein is 50 kDa gamma-zein.